A 552-amino-acid chain; its full sequence is Segmentation polarity homeobox protein engrailed (552 aa).

The span at 93–108 shows a compositional bias: low complexity; sequence SGSGSPASCSTPASST. Disordered regions lie at residues 93–112, 130–171, 309–419, and 433–460; these read SGSG…PLTI, THTT…TAKP, PAAP…GGKN, and DRPS…PRTA. Over residues 135-151 the composition is skewed to acidic residues; the sequence is EEEEAEEDDDIDVDVDD. A compositionally biased stretch (low complexity) spans 317-382; the sequence is PPLSSSASSL…SGSGVNASSP (66 aa). The segment covering 446–457 has biased composition (basic and acidic residues); that stretch reads QPKDKTNDEKRP. Residues 454-513 constitute a DNA-binding region (homeobox); that stretch reads EKRPRTAFSSEQLARLKREFNENRYLTERRRQQLSSELGLNEAQIKIWFQNKRAKIKKST.

It belongs to the engrailed homeobox family. Phosphorylated. Phosphorylation may directly or allosterically modify its function.

It localises to the nucleus. Its function is as follows. This protein specifies the body segmentation pattern. It is required for the development of the central nervous system. Transcriptional regulator that represses activated promoters. Wg signaling operates by inactivating the SGG repression of EN autoactivation. The polypeptide is Segmentation polarity homeobox protein engrailed (en) (Drosophila melanogaster (Fruit fly)).